We begin with the raw amino-acid sequence, 199 residues long: V-type ATP synthase subunit E (199 aa).

Belongs to the V-ATPase E subunit family.

In terms of biological role, produces ATP from ADP in the presence of a proton gradient across the membrane. This is V-type ATP synthase subunit E (atpE) from Borreliella burgdorferi (strain ATCC 35210 / DSM 4680 / CIP 102532 / B31) (Borrelia burgdorferi).